The chain runs to 218 residues: Phosphatidylserine decarboxylase proenzyme (218 aa).

Catalysis depends on Ser188, which acts as the Schiff-base intermediate with substrate; via pyruvic acid. Ser188 bears the Pyruvic acid (Ser); by autocatalysis mark.

The protein belongs to the phosphatidylserine decarboxylase family. PSD-A subfamily. Heterodimer of a large membrane-associated beta subunit and a small pyruvoyl-containing alpha subunit. The cofactor is pyruvate. Is synthesized initially as an inactive proenzyme. Formation of the active enzyme involves a self-maturation process in which the active site pyruvoyl group is generated from an internal serine residue via an autocatalytic post-translational modification. Two non-identical subunits are generated from the proenzyme in this reaction, and the pyruvate is formed at the N-terminus of the alpha chain, which is derived from the carboxyl end of the proenzyme. The post-translation cleavage follows an unusual pathway, termed non-hydrolytic serinolysis, in which the side chain hydroxyl group of the serine supplies its oxygen atom to form the C-terminus of the beta chain, while the remainder of the serine residue undergoes an oxidative deamination to produce ammonia and the pyruvoyl prosthetic group on the alpha chain.

It localises to the cell membrane. The catalysed reaction is a 1,2-diacyl-sn-glycero-3-phospho-L-serine + H(+) = a 1,2-diacyl-sn-glycero-3-phosphoethanolamine + CO2. It functions in the pathway phospholipid metabolism; phosphatidylethanolamine biosynthesis; phosphatidylethanolamine from CDP-diacylglycerol: step 2/2. In terms of biological role, catalyzes the formation of phosphatidylethanolamine (PtdEtn) from phosphatidylserine (PtdSer). This chain is Phosphatidylserine decarboxylase proenzyme, found in Streptomyces coelicolor (strain ATCC BAA-471 / A3(2) / M145).